The primary structure comprises 256 residues: Thiazole synthase (256 aa).

Lys95 serves as the catalytic Schiff-base intermediate with DXP. 1-deoxy-D-xylulose 5-phosphate contacts are provided by residues Gly156, 182–183, and 204–205; these read AG and NT.

This sequence belongs to the ThiG family. As to quaternary structure, homotetramer. Forms heterodimers with either ThiH or ThiS.

The protein resides in the cytoplasm. The enzyme catalyses [ThiS sulfur-carrier protein]-C-terminal-Gly-aminoethanethioate + 2-iminoacetate + 1-deoxy-D-xylulose 5-phosphate = [ThiS sulfur-carrier protein]-C-terminal Gly-Gly + 2-[(2R,5Z)-2-carboxy-4-methylthiazol-5(2H)-ylidene]ethyl phosphate + 2 H2O + H(+). Its pathway is cofactor biosynthesis; thiamine diphosphate biosynthesis. Catalyzes the rearrangement of 1-deoxy-D-xylulose 5-phosphate (DXP) to produce the thiazole phosphate moiety of thiamine. Sulfur is provided by the thiocarboxylate moiety of the carrier protein ThiS. In vitro, sulfur can be provided by H(2)S. The protein is Thiazole synthase of Escherichia coli O8 (strain IAI1).